A 134-amino-acid polypeptide reads, in one-letter code: Cytochrome b (134 aa).

Transmembrane regions (helical) follow at residues 33 to 53, 77 to 98, and 113 to 133; these read FGSL…FLAI, WLLR…YLHV, and WNIG…GYVL. The heme b site is built by histidine 83 and histidine 97.

Belongs to the cytochrome b family. As to quaternary structure, the cytochrome bc1 complex contains 11 subunits: 3 respiratory subunits (MT-CYB, CYC1 and UQCRFS1), 2 core proteins (UQCRC1 and UQCRC2) and 6 low-molecular weight proteins (UQCRH/QCR6, UQCRB/QCR7, UQCRQ/QCR8, UQCR10/QCR9, UQCR11/QCR10 and a cleavage product of UQCRFS1). This cytochrome bc1 complex then forms a dimer. It depends on heme b as a cofactor.

Its subcellular location is the mitochondrion inner membrane. In terms of biological role, component of the ubiquinol-cytochrome c reductase complex (complex III or cytochrome b-c1 complex) that is part of the mitochondrial respiratory chain. The b-c1 complex mediates electron transfer from ubiquinol to cytochrome c. Contributes to the generation of a proton gradient across the mitochondrial membrane that is then used for ATP synthesis. This chain is Cytochrome b (MT-CYB), found in Platyrrhinus helleri (Heller's broad-nosed bat).